Consider the following 301-residue polypeptide: MGRAREMGWMAAGLMIGAGACYCMYKLTMGRSEGNELEDEEEDEWEDGQDLDEEEADNWFDFTAMARPWSEDGDWDEPGAPGGTEDRRSGGGKANRAHPIKQRPFPYEHKNIWGEQSFKSFTCILDLNKCVSTQRKKRFTKNINAGFSLSPNISKHLASLSVVGNRSPTPHPTVREKALFVPENPNSSLENQGQIKMSIDEVCRETLLCCCKSFLQQAGLSLLISMTVINNMLAKSVSDLKFPLLSKGSGCAEVRGLEELMSLSEKPVLVGEALAAQMLSSFMCLFTRSGSREMLVEAISP.

Residues 1 to 6 are mitochondrion outer membrane (MOM)-targeting sequence; that stretch reads MGRARE. At 1-7 the chain is on the mitochondrial intermembrane side; the sequence is MGRAREM. Residues 8 to 25 form a helical; Signal-anchor membrane-spanning segment; sequence GWMAAGLMIGAGACYCMY. The mitochondrion outer membrane (MOM)-targeting sequence stretch occupies residues 26 to 36; it reads KLTMGRSEGNE. The Cytoplasmic portion of the chain corresponds to 26–301; it reads KLTMGRSEGN…REMLVEAISP (276 aa). The disordered stretch occupies residues 69–101; the sequence is WSEDGDWDEPGAPGGTEDRRSGGGKANRAHPIK.

Belongs to the eutherian X-chromosome-specific Armcx family. In terms of tissue distribution, highly expressed in the developing neural tissues, neural crest derivatives and hind limbs. Also widely expressed in the adult nervous tissue, especially in the forebrain, including the cerebral cortex, hippocampus and thalamus.

It is found in the mitochondrion. The protein resides in the mitochondrion outer membrane. In terms of biological role, may regulate the dynamics and distribution of mitochondria in neural cells. This Mus musculus (Mouse) protein is Protein ARMCX6 (Armcx6).